Consider the following 421-residue polypeptide: Testin (421 aa).

The PET domain occupies 92–199 (MILTNPVAAK…GDVKLPRDMN (108 aa)). Disordered stretches follow at residues 133–164 (EKQP…PSKC) and 193–213 (KLPR…GGDR). Residues 155–164 (PAHDQDPSKC) are compositionally biased toward basic and acidic residues. 3 LIM zinc-binding domains span residues 234 to 297 (YSCY…CDSE), 299 to 359 (PRCA…NHAV), and 362 to 421 (QGCH…KMMS).

The protein belongs to the prickle / espinas / testin family. As to quaternary structure, interacts via LIM domain 1 with ZYX. Interacts (via LIM domain 3) with ENAH and VASP. Interacts with ALKBH4, talin, actin, alpha-actinin, GRIP1 and PXN. Interacts (via LIM domain 2) with ACTL7A (via N-terminus). Heterodimer with ACTL7A; the heterodimer interacts with ENAH to form a heterotrimer.

Its subcellular location is the cytoplasm. It is found in the cell junction. It localises to the focal adhesion. Scaffold protein that may play a role in cell adhesion, cell spreading and in the reorganization of the actin cytoskeleton. Plays a role in the regulation of cell proliferation. May act as a tumor suppressor. The sequence is that of Testin (TES) from Ovis aries (Sheep).